The primary structure comprises 586 residues: Proline--tRNA ligase (586 aa).

This sequence belongs to the class-II aminoacyl-tRNA synthetase family. ProS type 1 subfamily. As to quaternary structure, homodimer.

The protein localises to the cytoplasm. It catalyses the reaction tRNA(Pro) + L-proline + ATP = L-prolyl-tRNA(Pro) + AMP + diphosphate. Its function is as follows. Catalyzes the attachment of proline to tRNA(Pro) in a two-step reaction: proline is first activated by ATP to form Pro-AMP and then transferred to the acceptor end of tRNA(Pro). As ProRS can inadvertently accommodate and process non-cognate amino acids such as alanine and cysteine, to avoid such errors it has two additional distinct editing activities against alanine. One activity is designated as 'pretransfer' editing and involves the tRNA(Pro)-independent hydrolysis of activated Ala-AMP. The other activity is designated 'posttransfer' editing and involves deacylation of mischarged Ala-tRNA(Pro). The misacylated Cys-tRNA(Pro) is not edited by ProRS. This chain is Proline--tRNA ligase, found in Kineococcus radiotolerans (strain ATCC BAA-149 / DSM 14245 / SRS30216).